A 455-amino-acid polypeptide reads, in one-letter code: MLCLMLCVLCWSRSDVAALGSVVENEDALLRHLFQGYQKWVRPVENSNDTIKVLFGLKISQLVDVDEKNQLMTTNVWLKQEWMDHKLSWNPEEYGGITAIRVPSESLWLPDIVLFENADGRFEGSLMTKAIVKYNGVVQWMPPASYKSSCTMELTFFPFDRQNCSMKFGSWTYDGSMVDLILVDENVDTKDFFDNGEWEILNAKGMKGNRKDGLYSYPFVTYSFVLRRLPLFYTLFLIIPCLGLSFLTVLVFYLPSDEGEKLSLSTSVLVSLTVFLLVIEEIIPSSSKVIPLIGEYLLFIMIFVTLSIIVTVFVINVHHRSSATYHPMAPWVKRLFLQKLPRLLCMKGHVDRYSFSDTEEKETTLKSKLPGKQKHKQAKDGEKVVIAFLEKAADSIRYISRHVKKDAFIRQVVQDWKFVAQVLDRIFLWLFLVVSVTGSVLIFTPALQMWLNSTL.

Residues 1 to 20 form the signal peptide; the sequence is MLCLMLCVLCWSRSDVAALG. Residues 21-229 lie on the Extracellular side of the membrane; sequence SVVENEDALL…VTYSFVLRRL (209 aa). N-linked (GlcNAc...) asparagine glycosylation is found at Asn48 and Asn163. The cysteines at positions 150 and 164 are disulfide-linked. Helical transmembrane passes span 230–254, 262–279, and 296–317; these read PLFY…VFYL, LSLS…LLVI, and YLLF…VINV. Residues 318 to 425 are Cytoplasmic-facing; the sequence is HHRSSATYHP…WKFVAQVLDR (108 aa). The chain crosses the membrane as a helical span at residues 426–444; that stretch reads IFLWLFLVVSVTGSVLIFT.

The protein belongs to the ligand-gated ion channel (TC 1.A.9) family. Acetylcholine receptor (TC 1.A.9.1) subfamily. Beta-3/CHRNB3 sub-subfamily. Neuronal AChR seems to be composed of two different type of subunits: alpha and beta. CHRNB3/beta-3 subunit is only able to form functional nAChRs when co-assembled with another beta subunit. Participates in pentameric assemblies along with CHRNA4/alpha-4 and CHRNB2/beta-2 subunits and with CHRNA6/alpha-6 as well, forming stoichiometries such as (CHRNA3:CHRNB4)2:CHRNB3, (CHRNA4:CHRNB2)2:CHRNB3 or (CHRNA6:CHRNB2)2:CHRNB3. As to expression, relatively abundant in the developing retina and in the trigeminal ganglion.

It localises to the synaptic cell membrane. It is found in the cell membrane. The enzyme catalyses Ca(2+)(in) = Ca(2+)(out). The catalysed reaction is K(+)(in) = K(+)(out). It carries out the reaction Na(+)(in) = Na(+)(out). Its activity is regulated as follows. Activated by a myriad of ligands such as acetylcholine, cytisine, nicotine, choline and epibatidine. Component of neuronal acetylcholine receptors (nAChRs) that function as pentameric, ligand-gated cation channels with high calcium permeability among other activities. nAChRs are excitatory neurotrasnmitter receptors formed by a collection of nAChR subunits known to mediate synaptic transmission in the nervous system and the neuromuscular junction. Each nAchR subunit confers differential attributes to channel properties, including activation, deactivation and desensitization kinetics, pH sensitivity, cation permeability, and binding to allosteric modulators. Has an accessory rather than functional role and is only able to form functional nAChRs when co-assembled with another beta subunit. Participates in pentameric assemblies along with CHRNA3, CHRNA4, CHRNA6, CHRNB2 and CHRNB4. Modulates receptor assembly and increases receptor sensitivity to nicotine when associated with CHRNB2, CHRNA4 and/or CHRNA6 as well as CHRNA3 and CHRNB4. Seems to play a role in nicotine addiction. The protein is Neuronal acetylcholine receptor subunit beta-3 (CHRNB3) of Gallus gallus (Chicken).